A 249-amino-acid polypeptide reads, in one-letter code: 5'-nucleotidase SurE (249 aa).

Positions 8, 9, 39, and 91 each coordinate a divalent metal cation.

Belongs to the SurE nucleotidase family. A divalent metal cation is required as a cofactor.

The protein resides in the cytoplasm. It catalyses the reaction a ribonucleoside 5'-phosphate + H2O = a ribonucleoside + phosphate. Nucleotidase that shows phosphatase activity on nucleoside 5'-monophosphates. This chain is 5'-nucleotidase SurE, found in Magnetococcus marinus (strain ATCC BAA-1437 / JCM 17883 / MC-1).